The chain runs to 235 residues: 2,3,4,5-tetrahydropyridine-2,6-dicarboxylate N-acetyltransferase (235 aa).

Belongs to the transferase hexapeptide repeat family. DapH subfamily.

The catalysed reaction is (S)-2,3,4,5-tetrahydrodipicolinate + acetyl-CoA + H2O = L-2-acetamido-6-oxoheptanedioate + CoA. It participates in amino-acid biosynthesis; L-lysine biosynthesis via DAP pathway; LL-2,6-diaminopimelate from (S)-tetrahydrodipicolinate (acetylase route): step 1/3. Functionally, catalyzes the transfer of an acetyl group from acetyl-CoA to tetrahydrodipicolinate. The protein is 2,3,4,5-tetrahydropyridine-2,6-dicarboxylate N-acetyltransferase of Exiguobacterium sp. (strain ATCC BAA-1283 / AT1b).